The sequence spans 474 residues: tRNA modification GTPase MnmE (474 aa).

The (6S)-5-formyl-5,6,7,8-tetrahydrofolate site is built by Arg23, Glu86, and Lys125. The 176-residue stretch at 221–396 (GIPVAIVGEP…LKEKLLEYVN (176 aa)) folds into the TrmE-type G domain. Asn231 contacts K(+). GTP contacts are provided by residues 231-236 (NVGKST), 250-256 (SEIAGTT), and 275-278 (DTAG). A Mg(2+)-binding site is contributed by Ser235. Positions 250, 252, and 255 each coordinate K(+). Residue Thr256 coordinates Mg(2+). Lys474 serves as a coordination point for (6S)-5-formyl-5,6,7,8-tetrahydrofolate.

It belongs to the TRAFAC class TrmE-Era-EngA-EngB-Septin-like GTPase superfamily. TrmE GTPase family. Homodimer. Heterotetramer of two MnmE and two MnmG subunits. K(+) serves as cofactor.

The protein resides in the cytoplasm. Exhibits a very high intrinsic GTPase hydrolysis rate. Involved in the addition of a carboxymethylaminomethyl (cmnm) group at the wobble position (U34) of certain tRNAs, forming tRNA-cmnm(5)s(2)U34. This Christiangramia forsetii (strain DSM 17595 / CGMCC 1.15422 / KT0803) (Gramella forsetii) protein is tRNA modification GTPase MnmE.